The following is a 458-amino-acid chain: ATP synthase subunit beta 2 (458 aa).

148–155 provides a ligand contact to ATP; that stretch reads GGAGVGKT.

This sequence belongs to the ATPase alpha/beta chains family. In terms of assembly, F-type ATPases have 2 components, CF(1) - the catalytic core - and CF(0) - the membrane proton channel. CF(1) has five subunits: alpha(3), beta(3), gamma(1), delta(1), epsilon(1). CF(0) has three main subunits: a(1), b(2) and c(9-12). The alpha and beta chains form an alternating ring which encloses part of the gamma chain. CF(1) is attached to CF(0) by a central stalk formed by the gamma and epsilon chains, while a peripheral stalk is formed by the delta and b chains.

The protein resides in the cell inner membrane. It carries out the reaction ATP + H2O + 4 H(+)(in) = ADP + phosphate + 5 H(+)(out). Its function is as follows. Produces ATP from ADP in the presence of a proton gradient across the membrane. The catalytic sites are hosted primarily by the beta subunits. In Marinomonas sp. (strain MWYL1), this protein is ATP synthase subunit beta 2.